We begin with the raw amino-acid sequence, 1318 residues long: Serine/threonine-protein kinase ppk18 (1318 aa).

The tract at residues 431–485 (PSVSPEEVHDISQFNHRNDPPITAASVDSSNSFSVHRSSTNHSSTNSGSPNLSRR) is disordered. The span at 462 to 479 (SFSVHRSSTNHSSTNSGS) shows a compositional bias: low complexity. Residues 566–934 (YEIIKPISKG…INEIKEHPFF (369 aa)) form the Protein kinase domain. Residues 572–580 (ISKGTFGTV) and lysine 595 contribute to the ATP site. The Proton acceptor role is filled by aspartate 690. Positions 935–1044 (NGINWDDIFS…KNLSVLERAN (110 aa)) constitute an AGC-kinase C-terminal domain. Disordered stretches follow at residues 968 to 1022 (GAAE…FSEA), 1058 to 1078 (KLHI…DMPS), and 1091 to 1127 (SLMT…GPKS). The span at 972 to 1000 (SNMSSSVNSGEEVSKDNNVSQERGSQFLR) shows a compositional bias: polar residues. The span at 1091-1115 (SLMTNQGSNFSSTDSTPRKSINSSD) shows a compositional bias: polar residues. Over residues 1116 to 1127 (VESRSKTDGPKS) the composition is skewed to basic and acidic residues. In terms of domain architecture, Response regulatory spans 1200 to 1316 (KALICVSKLN…LLRGYIARLC (117 aa)).

This sequence belongs to the protein kinase superfamily. Ser/Thr protein kinase family.

It localises to the cytoplasm. The catalysed reaction is L-seryl-[protein] + ATP = O-phospho-L-seryl-[protein] + ADP + H(+). It catalyses the reaction L-threonyl-[protein] + ATP = O-phospho-L-threonyl-[protein] + ADP + H(+). The polypeptide is Serine/threonine-protein kinase ppk18 (ppk18) (Schizosaccharomyces pombe (strain 972 / ATCC 24843) (Fission yeast)).